Consider the following 435-residue polypeptide: uncharacterized protein (435 aa).

12 helical membrane passes run 26-46 (LLSG…VAAP), 61-81 (IVFS…GSLL), 96-116 (IWSF…LYLF), 119-139 (LIGL…ALWF), 150-170 (LFDS…AFLV), 177-197 (VAFL…WQYY), 242-262 (VWGL…LLTW), 281-301 (FTAV…GWLV), 325-345 (FGFF…IICI), 347-367 (IGLA…AELA), 385-405 (LFGG…TGSF), and 407-427 (LSFL…VFVL).

The protein belongs to the major facilitator superfamily. Phthalate permease family.

Its subcellular location is the cell membrane. This is an uncharacterized protein from Bacillus subtilis (strain 168).